Reading from the N-terminus, the 518-residue chain is Forkhead box protein H1 (518 aa).

The segment at 72–113 is disordered; that stretch reads GSMYGLSPGTHEGSCTHTHEGPKDSMAGDQTRSRKSKKKNYH. Residues 104–113 show a composition bias toward basic residues; that stretch reads SRKSKKKNYH. The segment at residues 117–213 is a DNA-binding region (fork-head); sequence KPPYSYLAMI…MKLQNTALTR (97 aa). Residues 318-397 form a disordered region; that stretch reads KPTRNARSPG…NYSPIEPPKK (80 aa). Over residues 329-346 the composition is skewed to low complexity; that stretch reads STIHSTYSSSSSSISTIS. The SMAD-interaction domain (SID) stretch occupies residues 380-506; sequence TSSDPDTGNY…PSFLSQCLGS (127 aa). A Fast/FoxH1 motif 1 (FM1) motif is present at residues 405-409; sequence LPTSY. The short motif at 415 to 421 is the Fast/FoxH1 motif 2 (FM2) element; sequence PNVVAPP. An SMAD interaction motif (SIM) motif is present at residues 470 to 491; that stretch reads LDNMLRAMPPNKSVFDVLTSHP.

ARF1 contains 2 smad2s, 1 smad4 and 1 foxh1/fast-1 protein. Interaction with smad4 is most likely indirect through interaction with the MH2 domain of smad2. Binds to the MH2 domain of smad3, which can incorporate into the ARF1 complex. The ARF1 and ARF2 complexes are activated by distinct TGF-beta family members; formation of ARF1 is promoted by activin. Interacts (via Fork-head domain) with gtf2ird1/wbscr11 (via repeats 4-5). Highly expressed in the animal cap (prospective ectoderm) and prospective mesoderm of stage 10.25 embryos.

Its subcellular location is the nucleus. Transcriptional activator. Recognizes and binds to the DNA sequence 5'-TGT[GT][GT]ATT-3'. Upon TGF-beta induction, forms a transcriptionally active complex with smad2 and smad4 called activin-responsive factor 1 (ARF1), which binds a site on the mix-B/mix.2 promoter called the activin response element (ARE). Binds to activated smads and the ARE with much lower affinity than fast3. Necessary for the first steps in mesoderm specification, directly inducing mesodermal genes. Acts with fast3 to control the convergent extension movements of gastrulation. Binds to the proximal element (PE) of the gsc gene and cooperates with gtf2ird1/wbscr11 and SMAD proteins to regulate gsc transcription. In Xenopus laevis (African clawed frog), this protein is Forkhead box protein H1 (foxh1).